A 622-amino-acid chain; its full sequence is Polypeptide N-acetylgalactosaminyltransferase 18 (622 aa).

Residues 1–12 are Cytoplasmic-facing; that stretch reads MVCTRKTKTLVS. Residues 13–35 traverse the membrane as a helical; Signal-anchor for type II membrane protein segment; the sequence is TCVILSGMTNIICLLYVGWVTNY. The Lumenal portion of the chain corresponds to 36-622; the sequence is IASVYVRGQE…ITNVLRSLVS (587 aa). 5 cysteine pairs are disulfide-bonded: Cys144-Cys392, Cys383-Cys462, Cys497-Cys513, Cys545-Cys558, and Cys586-Cys606. Asn146 is a glycosylation site (N-linked (GlcNAc...) asparagine). The tract at residues 153–267 is catalytic subdomain A; the sequence is LPEVSIVFIF…VGWAEPVLTR (115 aa). Asp194 lines the substrate pocket. A glycan (N-linked (GlcNAc...) asparagine) is linked at Asn195. Mn(2+) is bound by residues Asp251 and His253. The N-linked (GlcNAc...) asparagine glycan is linked to Asn320. The segment at 324-400 is catalytic subdomain B; the sequence is PIRSPALIGC…PCSRIAHIER (77 aa). A Mn(2+)-binding site is contributed by His397. Residues Arg400 and Tyr405 each contribute to the substrate site. In terms of domain architecture, Ricin B-type lectin spans 484 to 614; it reads AYGVLQNSLK…KCSGQHWTIT (131 aa).

It belongs to the glycosyltransferase 2 family. GalNAc-T subfamily. It depends on Mn(2+) as a cofactor.

It localises to the golgi apparatus membrane. It catalyses the reaction L-seryl-[protein] + UDP-N-acetyl-alpha-D-galactosamine = a 3-O-[N-acetyl-alpha-D-galactosaminyl]-L-seryl-[protein] + UDP + H(+). It carries out the reaction L-threonyl-[protein] + UDP-N-acetyl-alpha-D-galactosamine = a 3-O-[N-acetyl-alpha-D-galactosaminyl]-L-threonyl-[protein] + UDP + H(+). It participates in protein modification; protein glycosylation. Functionally, catalyzes the initial reaction in O-linked oligosaccharide biosynthesis, the transfer of an N-acetyl-D-galactosamine (GalNAc) residue from UDP-GalNAc to a serine or threonine residue on the protein receptor. This is Polypeptide N-acetylgalactosaminyltransferase 18 (Galnt18) from Mus musculus (Mouse).